Reading from the N-terminus, the 275-residue chain is Large ribosomal subunit protein uL2c (275 aa).

2 disordered regions span residues 1–30 and 225–275; these read MAIHLYKTSTPSTRNGAVDSQAKSTPQKQK and MNPV…RRRK. Positions 21–30 are enriched in polar residues; that stretch reads QAKSTPQKQK.

The protein belongs to the universal ribosomal protein uL2 family. In terms of assembly, part of the 50S ribosomal subunit.

Its subcellular location is the plastid. It localises to the chloroplast. In Illicium oligandrum (Star anise), this protein is Large ribosomal subunit protein uL2c (rpl2).